The following is a 295-amino-acid chain: Ribosomal protein L11 methyltransferase (295 aa).

Positions 138, 161, 183, and 230 each coordinate S-adenosyl-L-methionine.

Belongs to the methyltransferase superfamily. PrmA family.

The protein localises to the cytoplasm. The catalysed reaction is L-lysyl-[protein] + 3 S-adenosyl-L-methionine = N(6),N(6),N(6)-trimethyl-L-lysyl-[protein] + 3 S-adenosyl-L-homocysteine + 3 H(+). In terms of biological role, methylates ribosomal protein L11. The protein is Ribosomal protein L11 methyltransferase of Rhodopseudomonas palustris (strain BisB5).